Here is a 304-residue protein sequence, read N- to C-terminus: Voltage-dependent anion channel-forming protein YneE (304 aa).

The next 4 helical transmembrane spans lie at 28–48 (LLLN…YTML), 50–70 (IKFT…FLGF), 209–229 (AYTL…PFAL), and 235–255 (YMTP…DALA).

It belongs to the anion channel-forming bestrophin (TC 1.A.46) family.

Its subcellular location is the cell membrane. The sequence is that of Voltage-dependent anion channel-forming protein YneE (yneE) from Salmonella typhi.